Reading from the N-terminus, the 446-residue chain is Glutamate-1-semialdehyde 2,1-aminomutase (446 aa).

Lys-278 carries the post-translational modification N6-(pyridoxal phosphate)lysine.

This sequence belongs to the class-III pyridoxal-phosphate-dependent aminotransferase family. HemL subfamily. Homodimer. Requires pyridoxal 5'-phosphate as cofactor.

It localises to the cytoplasm. The enzyme catalyses (S)-4-amino-5-oxopentanoate = 5-aminolevulinate. It participates in porphyrin-containing compound metabolism; protoporphyrin-IX biosynthesis; 5-aminolevulinate from L-glutamyl-tRNA(Glu): step 2/2. The sequence is that of Glutamate-1-semialdehyde 2,1-aminomutase from Deinococcus geothermalis (strain DSM 11300 / CIP 105573 / AG-3a).